The sequence spans 312 residues: Olfactory receptor 13J1 (312 aa).

At 1–25 the chain is on the extracellular side; sequence MEPLNRTEVSEFFLKGFSGYPALEH. N-linked (GlcNAc...) asparagine glycosylation occurs at N5. The chain crosses the membrane as a helical span at residues 26–46; that stretch reads LLFPLCSAMYLVTLLGNTAIM. The Cytoplasmic portion of the chain corresponds to 47–54; it reads AVSVLDIH. A helical transmembrane segment spans residues 55 to 75; that stretch reads LHTPVYFFLGNLSTLDICYTP. Over 76 to 99 the chain is Extracellular; it reads TFVPLMLVHLLSSRKTISFAVCAI. C97 and C189 are oxidised to a cystine. A helical transmembrane segment spans residues 100–120; that stretch reads QMCLSLSTGSTECLLLAITAY. At 121–139 the chain is on the cytoplasmic side; the sequence is DRYLAICQPLRYHVLMSHR. A helical transmembrane segment spans residues 140–160; that stretch reads LCVLLMGAAWVLCLLKSVTEM. Residues 161 to 197 lie on the Extracellular side of the membrane; sequence VISMRLPFCGHHVVSHFTCKILAVLKLACGNTSVSED. N191 is a glycosylation site (N-linked (GlcNAc...) asparagine). The helical transmembrane segment at 198–217 threads the bilayer; the sequence is FLLAGSILLLPVPLAFICLS. The Cytoplasmic segment spans residues 218–237; the sequence is YLLILATILRVPSAARCCKA. A helical transmembrane segment spans residues 238–258; the sequence is FSTCLAHLAVVLLFYGTIIFM. At 259-271 the chain is on the extracellular side; sequence YLKPKSKEAHISD. Residues 272–292 form a helical membrane-spanning segment; the sequence is EVFTVLYAMVTTMLNPTIYSL. Residues 293-312 are Cytoplasmic-facing; it reads RNKEVKEAARKVWGRSRASR.

This sequence belongs to the G-protein coupled receptor 1 family.

It localises to the cell membrane. Odorant receptor. The polypeptide is Olfactory receptor 13J1 (OR13J1) (Homo sapiens (Human)).